Consider the following 226-residue polypeptide: Ribose-5-phosphate isomerase A (226 aa).

Substrate-binding positions include 25 to 28 (TGST), 81 to 84 (DGAD), and 94 to 97 (KGGG). The Proton acceptor role is filled by E103. K121 contacts substrate.

It belongs to the ribose 5-phosphate isomerase family. As to quaternary structure, homodimer.

The enzyme catalyses aldehydo-D-ribose 5-phosphate = D-ribulose 5-phosphate. It participates in carbohydrate degradation; pentose phosphate pathway; D-ribose 5-phosphate from D-ribulose 5-phosphate (non-oxidative stage): step 1/1. In terms of biological role, catalyzes the reversible conversion of ribose-5-phosphate to ribulose 5-phosphate. This Enterococcus faecalis (strain ATCC 700802 / V583) protein is Ribose-5-phosphate isomerase A.